The following is a 283-amino-acid chain: Light-independent protochlorophyllide reductase iron-sulfur ATP-binding protein (283 aa).

Residues 15–20 (GIGKST) and K44 contribute to the ATP site. S19 contributes to the Mg(2+) binding site. Positions 100 and 134 each coordinate [4Fe-4S] cluster. An ATP-binding site is contributed by 185–186 (NR).

This sequence belongs to the NifH/BchL/ChlL family. Homodimer. Protochlorophyllide reductase is composed of three subunits; ChlL, ChlN and ChlB. It depends on [4Fe-4S] cluster as a cofactor.

It carries out the reaction chlorophyllide a + oxidized 2[4Fe-4S]-[ferredoxin] + 2 ADP + 2 phosphate = protochlorophyllide a + reduced 2[4Fe-4S]-[ferredoxin] + 2 ATP + 2 H2O. It participates in porphyrin-containing compound metabolism; chlorophyll biosynthesis (light-independent). Functionally, component of the dark-operative protochlorophyllide reductase (DPOR) that uses Mg-ATP and reduced ferredoxin to reduce ring D of protochlorophyllide (Pchlide) to form chlorophyllide a (Chlide). This reaction is light-independent. The L component serves as a unique electron donor to the NB-component of the complex, and binds Mg-ATP. In Synechococcus sp. (strain JA-3-3Ab) (Cyanobacteria bacterium Yellowstone A-Prime), this protein is Light-independent protochlorophyllide reductase iron-sulfur ATP-binding protein.